We begin with the raw amino-acid sequence, 593 residues long: UvrABC system protein C (593 aa).

The 78-residue stretch at 14 to 91 folds into the GIY-YIG domain; it reads DSPGCYLHKD…IQENMPKYNI (78 aa). The 36-residue stretch at 196 to 231 folds into the UVR domain; sequence NKIVNGLTEKMKSAAMTMEFERAAEYRDLIEAISLL.

This sequence belongs to the UvrC family. Interacts with UvrB in an incision complex.

It localises to the cytoplasm. Its function is as follows. The UvrABC repair system catalyzes the recognition and processing of DNA lesions. UvrC both incises the 5' and 3' sides of the lesion. The N-terminal half is responsible for the 3' incision and the C-terminal half is responsible for the 5' incision. This is UvrABC system protein C from Streptococcus agalactiae serotype Ia (strain ATCC 27591 / A909 / CDC SS700).